The following is a 294-amino-acid chain: Indole-3-glycerol phosphate synthase (294 aa).

It belongs to the TrpC family.

The enzyme catalyses 1-(2-carboxyphenylamino)-1-deoxy-D-ribulose 5-phosphate + H(+) = (1S,2R)-1-C-(indol-3-yl)glycerol 3-phosphate + CO2 + H2O. It participates in amino-acid biosynthesis; L-tryptophan biosynthesis; L-tryptophan from chorismate: step 4/5. This chain is Indole-3-glycerol phosphate synthase, found in Parasynechococcus marenigrum (strain WH8102).